A 418-amino-acid polypeptide reads, in one-letter code: 3-deoxy-D-manno-octulosonic acid transferase (418 aa).

A helical; Signal-anchor membrane pass occupies residues 7-27 (FLSFLLLPIYFVIIFIRLLIG). Glutamate 60 (proton acceptor) is an active-site residue. CMP contacts are provided by residues 264–265 (PR), 305–307 (FGE), and 330–333 (NILE).

Belongs to the glycosyltransferase group 1 family. Glycosyltransferase 30 subfamily.

The protein resides in the cell inner membrane. The catalysed reaction is lipid IVA (E. coli) + CMP-3-deoxy-beta-D-manno-octulosonate = alpha-Kdo-(2-&gt;6)-lipid IVA (E. coli) + CMP + H(+). The protein operates within bacterial outer membrane biogenesis; LPS core biosynthesis. Functionally, involved in lipopolysaccharide (LPS) biosynthesis. Catalyzes the transfer of 3-deoxy-D-manno-octulosonate (Kdo) residue(s) from CMP-Kdo to lipid IV(A), the tetraacyldisaccharide-1,4'-bisphosphate precursor of lipid A. This Rickettsia bellii (strain RML369-C) protein is 3-deoxy-D-manno-octulosonic acid transferase (waaA).